Here is a 167-residue protein sequence, read N- to C-terminus: MKITSGDLPGVGKKISFITSEGSMVVLVIHHTGKREMYFFDDADDDEVSFSLTLSAEETKQMGAQLLGAILNPADTDKIDRIKLIRKQVVVEWIDITKHSPIISKSIAQIEKMKPKGISIVGVFKNDEMMVDPEPTLVLEKGDTLMAVGKRDAIQKFEELCACKENN.

Residues isoleucine 79 to cysteine 163 enclose the RCK C-terminal domain.

In terms of assembly, interacts with AmhT.

Its subcellular location is the cell membrane. Modulates the activity of the ammonium/proton antiporter AmhT. This chain is Ammonium/H(+) antiporter subunit AmhM (amhM), found in Alkalihalophilus pseudofirmus (strain ATCC BAA-2126 / JCM 17055 / OF4) (Bacillus pseudofirmus).